A 181-amino-acid polypeptide reads, in one-letter code: Thioredoxin-like protein CITRX1, chloroplastic (181 aa).

The segment at 1-20 (MQAATLSFHPSAPPPQTSAC) is disordered. A chloroplast-targeting transit peptide spans 1–70 (MQAATLSFHP…PAVATGKYVR (70 aa)). The Thioredoxin domain occupies 71 to 181 (EDYLVKKVSA…MMRDIINNDL (111 aa)). Catalysis depends on nucleophile residues Cys-104 and Cys-107. The cysteines at positions 104 and 107 are disulfide-linked.

It belongs to the thioredoxin family. Plant CITRX-type subfamily.

The protein localises to the plastid. Its subcellular location is the chloroplast. In terms of biological role, probable thiol-disulfide oxidoreductase that may play a role in proper chloroplast development. The protein is Thioredoxin-like protein CITRX1, chloroplastic of Nicotiana benthamiana.